The following is a 550-amino-acid chain: Rab GTPase-activating protein 22 (550 aa).

The tract at residues 1 to 49 (MKALRRSYTSTSSGNSSSSSSLPSSSSSSLPSSSSSSPPSSNSNSYSNS) is disordered. A compositionally biased stretch (low complexity) spans 7 to 49 (SYTSTSSGNSSSSSSLPSSSSSSLPSSSSSSPPSSNSNSYSNS). Positions 126–460 (GVDPSIRAEV…CLWEVMWADQ (335 aa)) constitute a Rab-GAP TBC domain.

As to quaternary structure, interacts with AGT1 in peroxisome under biotic stress conditions. Expressed in root meristems, vascular tissues, guard cells, trichomes, styles and receptacles.

It is found in the nucleus. Its subcellular location is the peroxisome. Involved in defense response against fungal and bacterial pathogens. Acts as a negative regulator of jasmonate (JA) responses during infection by the soil-born fungal pathogen Verticillium longisporum. Involved in abscisic acid-dependent stomata closure in response to infection by V.longisporum and Pseudomonas syringae. May be a downstream component of brassinosteroid-mediated signaling. This Arabidopsis thaliana (Mouse-ear cress) protein is Rab GTPase-activating protein 22.